Consider the following 416-residue polypeptide: MASNGSFSAQRNANARTTMKRRSDNRGYGGGIGGYQEETNRYAPPQKRFRSQAQQQFRSGHNPLYHHHGSNNNNVSRVSSQSYNNCGVDVIASNSSFALRNNDSNTNNYQKPFVAGYGNPNPQIVPLPLPYRKLDDNLSLDSLPDWVPNSRTLTPNYPVRSSNFVPNTPVFTNVQNPMNHSNMVSVVSQSMHQPIVLSKELTDLLSLLNNEKEKKTLEASNSDSLPVGLSFDNPSSLNVRHESVIKSLYSDMPRQCSSCGLRFKCQEEHSKHMDWHVRKNRSVKTTTRLGQQPKKSRGWLASASLWLCAATGGETVEVASFGGEMQKKKGKDEEPKQLMVPADEDQKNCALCVEPFEEFFSHEDDDWMYKDAVYLTKNGRIVHVKCMPEPRPAKDLREPSRVMSVTVPSVAKAIAC.

A compositionally biased stretch (polar residues) spans 1 to 17 (MASNGSFSAQRNANART). Residues 1–80 (MASNGSFSAQ…NNNNVSRVSS (80 aa)) are disordered. Over residues 70–80 (SNNNNVSRVSS) the composition is skewed to low complexity. A coiled-coil region spans residues 199 to 220 (KELTDLLSLLNNEKEKKTLEAS). Residues 254 to 276 (RQCSSCGLRFKCQEEHSKHMDWH) form a C2H2-type zinc finger.

In terms of assembly, forms a complex with cleavage and polyadenylation specificity factor (CPSF) subunits CLPS3, CLPS5, CPSF30, PCFS4, PCFS5, CSTF77 and FIPS3.

The protein resides in the nucleus. This Arabidopsis thaliana (Mouse-ear cress) protein is Polyadenylation and cleavage factor homolog 1.